We begin with the raw amino-acid sequence, 244 residues long: 7-cyano-7-deazaguanine synthase (244 aa).

ATP is bound at residue 14–24 (FSGGQDSATCL). Residues Cys-202, Cys-217, Cys-220, and Cys-223 each coordinate Zn(2+).

Belongs to the QueC family. Zn(2+) is required as a cofactor.

The enzyme catalyses 7-carboxy-7-deazaguanine + NH4(+) + ATP = 7-cyano-7-deazaguanine + ADP + phosphate + H2O + H(+). It functions in the pathway purine metabolism; 7-cyano-7-deazaguanine biosynthesis. In terms of biological role, catalyzes the ATP-dependent conversion of 7-carboxy-7-deazaguanine (CDG) to 7-cyano-7-deazaguanine (preQ(0)). The chain is 7-cyano-7-deazaguanine synthase from Paraburkholderia phytofirmans (strain DSM 17436 / LMG 22146 / PsJN) (Burkholderia phytofirmans).